A 184-amino-acid polypeptide reads, in one-letter code: Isopentenyl-diphosphate Delta-isomerase (184 aa).

His-26 and His-33 together coordinate Mn(2+). The Nudix hydrolase domain maps to 31-165; it reads PLHLAFSCYL…PSAFSPWLGL (135 aa). Residue Cys-68 is part of the active site. His-70 lines the Mn(2+) pocket. Mg(2+) is bound at residue Glu-88. Mn(2+) is bound by residues Glu-115 and Glu-117. The active site involves Glu-117.

This sequence belongs to the IPP isomerase type 1 family. Requires Mg(2+) as cofactor. The cofactor is Mn(2+).

It localises to the cytoplasm. It carries out the reaction isopentenyl diphosphate = dimethylallyl diphosphate. It functions in the pathway isoprenoid biosynthesis; dimethylallyl diphosphate biosynthesis; dimethylallyl diphosphate from isopentenyl diphosphate: step 1/1. Its function is as follows. Catalyzes the 1,3-allylic rearrangement of the homoallylic substrate isopentenyl (IPP) to its highly electrophilic allylic isomer, dimethylallyl diphosphate (DMAPP). In Paenarthrobacter aurescens (strain TC1), this protein is Isopentenyl-diphosphate Delta-isomerase.